The following is a 1969-amino-acid chain: Myosin-3 (1969 aa).

Residues 33 to 82 form the Myosin N-terminal SH3-like domain; that stretch reads DSKKNCWIPDPEDGFVAAEIQSTTGDQVTVVTVKGNQITVKKDQCQEMNP. The Myosin motor domain maps to 86–791; the sequence is DKTEDMANLT…VLAKLEDLRD (706 aa). Residue Lys-130 is modified to N6,N6,N6-trimethyllysine. 179–186 serves as a coordination point for ATP; that stretch reads GESGAGKT. Actin-binding stretches follow at residues 667–689 and 770–784; these read LNNL…IPNE and KIGE…GVLA. Positions 794-823 constitute an IQ domain; it reads LSRIVTMFQSRIRSYLAKAEVRRRYEQQTG. The stretch at 853 to 1941 forms a coiled coil; the sequence is LKAGKEQEAM…KMRNKIRASA (1089 aa). Disordered stretches follow at residues 943–967, 993–1029, and 1134–1153; these read QERH…KKHV, DEMA…EEDK, and ELES…NELQ. Basic and acidic residues-rich tracts occupy residues 1001 to 1029 and 1137 to 1153; these read SVAK…EEDK and SERN…NELQ.

This sequence belongs to the TRAFAC class myosin-kinesin ATPase superfamily. Myosin family. In terms of assembly, muscle myosin is a hexameric protein that consists of 2 heavy chain subunits (MHC), 2 alkali light chain subunits (MLC) and 2 regulatory light chain subunits (MLC-2).

The protein localises to the cytoplasm. The protein resides in the myofibril. It localises to the sarcomere. It is found in the a band. Essential for muscle contraction. Involved in ovulation likely by regulating the contraction of gonadal myoepithelial sheath cells. The polypeptide is Myosin-3 (Caenorhabditis briggsae).